A 315-amino-acid polypeptide reads, in one-letter code: Beta-carotene hydroxylase 1, chloroplastic (315 aa).

Residues 1–58 (MAAEISISASSRAICLQRNPFPAPKYFATAPPLLFFSPLTCNLDAILRSRRKPRLAAC) constitute a chloroplast transit peptide. A run of 2 helical transmembrane segments spans residues 112–132 (YLVAAVMSSLGITSMAVISVY) and 146–166 (FSEMFCTFALAFGAAIGMEYW). The 128-residue stretch at 159-286 (AAIGMEYWAR…KFDGVPYGLF (128 aa)) folds into the Fatty acid hydroxylase domain. The Histidine box-1 signature appears at 171-176 (HRALWH). Residues 183 to 187 (HESHH) carry the Histidine box-2 motif. The next 2 membrane-spanning stretches (helical) occupy residues 196–216 (LNDIFAIINAVPAIALLSFGF) and 222–242 (IPGLCFGAGLGITVFGMAYMF). Residues 244 to 249 (HDGLVH) carry the Histidine box-3 motif. The Histidine box-4 signature appears at 270-274 (HQLHH).

The protein belongs to the sterol desaturase family.

Its subcellular location is the plastid. It localises to the chloroplast membrane. The enzyme catalyses all-trans-beta-carotene + 4 reduced [2Fe-2S]-[ferredoxin] + 2 O2 + 4 H(+) = all-trans-zeaxanthin + 4 oxidized [2Fe-2S]-[ferredoxin] + 2 H2O. It carries out the reaction all-trans-beta-carotene + 2 reduced [2Fe-2S]-[ferredoxin] + O2 + 2 H(+) = beta-cryptoxanthin + 2 oxidized [2Fe-2S]-[ferredoxin] + H2O. The catalysed reaction is beta-cryptoxanthin + 2 reduced [2Fe-2S]-[ferredoxin] + O2 + 2 H(+) = all-trans-zeaxanthin + 2 oxidized [2Fe-2S]-[ferredoxin] + H2O. With respect to regulation, inhibited by o-phenanthroline and 8-hydroxyquinoline. Functionally, nonheme diiron monooxygenase involved in the biosynthesis of xanthophylls. Specific for beta-ring hydroxylations of beta-carotene. Produces beta-cryptoxanthin and zeaxanthin. Uses ferredoxin as an electron donor. In Capsicum annuum (Capsicum pepper), this protein is Beta-carotene hydroxylase 1, chloroplastic.